Consider the following 41-residue polypeptide: Large ribosomal subunit protein bL36 (41 aa).

This sequence belongs to the bacterial ribosomal protein bL36 family.

This Rhizobium rhizogenes (strain K84 / ATCC BAA-868) (Agrobacterium radiobacter) protein is Large ribosomal subunit protein bL36.